The primary structure comprises 367 residues: Alanine racemase (367 aa).

Lysine 35 acts as the Proton acceptor; specific for D-alanine in catalysis. Lysine 35 bears the N6-(pyridoxal phosphate)lysine mark. Arginine 130 lines the substrate pocket. Tyrosine 258 (proton acceptor; specific for L-alanine) is an active-site residue. Methionine 306 serves as a coordination point for substrate.

It belongs to the alanine racemase family. Pyridoxal 5'-phosphate serves as cofactor.

The enzyme catalyses L-alanine = D-alanine. The protein operates within amino-acid biosynthesis; D-alanine biosynthesis; D-alanine from L-alanine: step 1/1. Functionally, catalyzes the interconversion of L-alanine and D-alanine. May also act on other amino acids. The protein is Alanine racemase (alr) of Acinetobacter baumannii (strain SDF).